Here is a 423-residue protein sequence, read N- to C-terminus: Serine hydroxymethyltransferase (423 aa).

Residues leucine 120 and 124 to 126 (GHL) each bind (6S)-5,6,7,8-tetrahydrofolate. The residue at position 229 (lysine 229) is an N6-(pyridoxal phosphate)lysine. 353–355 (SPF) provides a ligand contact to (6S)-5,6,7,8-tetrahydrofolate.

It belongs to the SHMT family. Homodimer. Pyridoxal 5'-phosphate is required as a cofactor.

The protein resides in the cytoplasm. It catalyses the reaction (6R)-5,10-methylene-5,6,7,8-tetrahydrofolate + glycine + H2O = (6S)-5,6,7,8-tetrahydrofolate + L-serine. It participates in one-carbon metabolism; tetrahydrofolate interconversion. The protein operates within amino-acid biosynthesis; glycine biosynthesis; glycine from L-serine: step 1/1. In terms of biological role, catalyzes the reversible interconversion of serine and glycine with tetrahydrofolate (THF) serving as the one-carbon carrier. This reaction serves as the major source of one-carbon groups required for the biosynthesis of purines, thymidylate, methionine, and other important biomolecules. Also exhibits THF-independent aldolase activity toward beta-hydroxyamino acids, producing glycine and aldehydes, via a retro-aldol mechanism. This chain is Serine hydroxymethyltransferase, found in Prochlorococcus marinus (strain AS9601).